The chain runs to 661 residues: COBRA-like protein 7 (661 aa).

A signal peptide spans 1–26; sequence MDSAPNFIPRLLLLSLLIVSIPLTSS. The segment at 26–45 is disordered; the sequence is SQSDANTTNPSPSPPSDSDL. 14 N-linked (GlcNAc...) asparagine glycosylation sites follow: N31, N64, N122, N170, N314, N327, N356, N369, N398, N410, N430, N472, N551, and N561. A lipid anchor (GPI-anchor amidated serine) is attached at S637. A propeptide spans 638–661 (removed in mature form); sequence SQHRKHISVFLLALPVLALLILRA.

It belongs to the COBRA family. As to expression, expressed in roots, stems, leaves, flowers and siliques.

Its subcellular location is the cell membrane. The polypeptide is COBRA-like protein 7 (COBL7) (Arabidopsis thaliana (Mouse-ear cress)).